A 123-amino-acid polypeptide reads, in one-letter code: ATP synthase epsilon chain (123 aa).

Residues 96–123 (ESRKQSAETEHDKAVAESELRAVKRMEA) are disordered.

It belongs to the ATPase epsilon chain family. F-type ATPases have 2 components, CF(1) - the catalytic core - and CF(0) - the membrane proton channel. CF(1) has five subunits: alpha(3), beta(3), gamma(1), delta(1), epsilon(1). CF(0) has three main subunits: a, b and c.

The protein resides in the cell membrane. Its function is as follows. Produces ATP from ADP in the presence of a proton gradient across the membrane. This chain is ATP synthase epsilon chain, found in Corynebacterium jeikeium (strain K411).